Consider the following 169-residue polypeptide: Co-chaperone protein HscB homolog (169 aa).

The 73-residue stretch at 2-74 (NYFDLFSLPV…CLRAQYLLLL (73 aa)) folds into the J domain.

The protein belongs to the HscB family. In terms of assembly, interacts with HscA and stimulates its ATPase activity.

Co-chaperone involved in the maturation of iron-sulfur cluster-containing proteins. Seems to help targeting proteins to be folded toward HscA. This is Co-chaperone protein HscB homolog from Psychromonas ingrahamii (strain DSM 17664 / CCUG 51855 / 37).